The chain runs to 266 residues: Undecaprenyl-diphosphatase (266 aa).

8 helical membrane passes run 4–24 (LATIILLGIIEGLTEFLPVSS), 41–61 (GSAAFKIAIQLGAILAVLVAY), 79–99 (AVAFTRNILIGFLPAMLVGAV), 108–128 (LESPATVAVALLVGGIAILAI), 143–163 (MPLRTAIAIGAVQCIAMIPGV), 184–204 (AEFSFFLAVPTMMGATAYSLW), 220–240 (IGLFVAFLVALVVVKAFVAIV), and 243–263 (FGFAPFAWYRIIVGGGALLWL).

Belongs to the UppP family.

It is found in the cell inner membrane. The catalysed reaction is di-trans,octa-cis-undecaprenyl diphosphate + H2O = di-trans,octa-cis-undecaprenyl phosphate + phosphate + H(+). In terms of biological role, catalyzes the dephosphorylation of undecaprenyl diphosphate (UPP). Confers resistance to bacitracin. The chain is Undecaprenyl-diphosphatase from Sphingopyxis alaskensis (strain DSM 13593 / LMG 18877 / RB2256) (Sphingomonas alaskensis).